The following is a 627-amino-acid chain: Hemocyanin B chain (627 aa).

Cu cation contacts are provided by histidine 173, histidine 177, and histidine 204. Asparagine 312 and asparagine 316 each carry an N-linked (GlcNAc...) asparagine glycan. Residues histidine 324, histidine 328, and histidine 364 each coordinate Cu cation. A disulfide bridge links cysteine 534 with cysteine 582.

This sequence belongs to the tyrosinase family. Hemocyanin subfamily. In terms of assembly, tarantula hemocyanin is a 24-chain polymer with seven different chains identified. As to expression, hemolymph.

It is found in the secreted. The protein resides in the extracellular space. Its function is as follows. Hemocyanins are copper-containing oxygen carriers occurring freely dissolved in the hemolymph of many mollusks and arthropods. This is Hemocyanin B chain (HCB) from Aphonopelma sp. (American tarantula).